We begin with the raw amino-acid sequence, 346 residues long: Protein RecA (346 aa).

67-74 (GPESSGKT) is an ATP binding site.

Belongs to the RecA family.

The protein resides in the cytoplasm. Can catalyze the hydrolysis of ATP in the presence of single-stranded DNA, the ATP-dependent uptake of single-stranded DNA by duplex DNA, and the ATP-dependent hybridization of homologous single-stranded DNAs. It interacts with LexA causing its activation and leading to its autocatalytic cleavage. The polypeptide is Protein RecA (Saccharopolyspora erythraea (strain ATCC 11635 / DSM 40517 / JCM 4748 / NBRC 13426 / NCIMB 8594 / NRRL 2338)).